Reading from the N-terminus, the 344-residue chain is Ferrochelatase (344 aa).

Residues histidine 214 and glutamate 295 each coordinate Fe cation.

Belongs to the ferrochelatase family.

It is found in the cytoplasm. It catalyses the reaction heme b + 2 H(+) = protoporphyrin IX + Fe(2+). Its pathway is porphyrin-containing compound metabolism; protoheme biosynthesis; protoheme from protoporphyrin-IX: step 1/1. Functionally, catalyzes the ferrous insertion into protoporphyrin IX. This chain is Ferrochelatase, found in Rhizobium etli (strain CIAT 652).